Reading from the N-terminus, the 302-residue chain is MKNFGLLVVCLSLATLVIPSDGVHIDGDAAPFFVVSQIQHTAGNPAVVGSSYTGRTAVAPPLNMRTNVAVPSTLGINSVNIGTNLPTFYQPTPQPVRSFKNTIDPSLLYSLMAGGLRGDGFLNQLNTIEFSSPAEVIDAVENAVENRADAIKDVIETVSGAVQNGDDEVEGIYDVFAEDDSENPVENLDDSDGVYDVFADAMEKKAEALENAAEAAAEYISDQSEEVDDLSEEVLDDDSDENDSTSSESEVEDSDVDLEVDVGIDLGGDLDLGGGVDLGGGMGMGGALNMNGGLDMGGRYGR.

An N-terminal signal peptide occupies residues 1-22; it reads MKNFGLLVVCLSLATLVIPSDG. A coiled-coil region spans residues 198–234; that stretch reads FADAMEKKAEALENAAEAAAEYISDQSEEVDDLSEEV. A disordered region spans residues 221-257; sequence SDQSEEVDDLSEEVLDDDSDENDSTSSESEVEDSDVD. Acidic residues predominate over residues 223–257; it reads QSEEVDDLSEEVLDDDSDENDSTSSESEVEDSDVD. Asn242 is a glycosylation site (N-linked (GlcNAc...) asparagine).

Component of the acid-insoluble organic matrix of calcified layers of the shell (at protein level).

Its subcellular location is the secreted. This is Coiled-coil domain-containing protein 2 from Lottia gigantea (Giant owl limpet).